Here is a 311-residue protein sequence, read N- to C-terminus: Deoxyhypusine hydroxylase (311 aa).

HEAT-like PBS-type repeat units follow at residues 69-95, 102-128, 196-222, 228-254, and 261-287; these read LKHEVAYVLGQTKNLHAAQYLRSVLEN, VRHEAAEALGALGDKDSLALLEDYFKN, ERYRAMFRLRDMGTDEACLALASGLDD, FKHEIAYVFGQLCNPVTVPALIKTLKD, and VRHEAAEALGSIATDECLPVLQSFLND. Fe cation-binding residues include His71, Glu72, His104, and Glu105. Residues His230, Glu231, His263, and Glu264 each coordinate Fe cation.

This sequence belongs to the deoxyhypusine hydroxylase family. The cofactor is Fe(2+).

The protein resides in the cytoplasm. It is found in the nucleus. It catalyses the reaction [eIF5A protein]-deoxyhypusine + AH2 + O2 = [eIF5A protein]-hypusine + A + H2O. It participates in protein modification; eIF5A hypusination. Catalyzes the hydroxylation of the N(6)-(4-aminobutyl)-L-lysine intermediate to form hypusine, an essential post-translational modification only found in mature eIF-5A factor. This is Deoxyhypusine hydroxylase from Debaryomyces hansenii (strain ATCC 36239 / CBS 767 / BCRC 21394 / JCM 1990 / NBRC 0083 / IGC 2968) (Yeast).